The following is a 66-amino-acid chain: DNA-directed RNA polymerase subunit Rpo10 (66 aa).

Positions 7, 10, 47, and 48 each coordinate Zn(2+).

The protein belongs to the archaeal Rpo10/eukaryotic RPB10 RNA polymerase subunit family. As to quaternary structure, part of the RNA polymerase complex. Requires Zn(2+) as cofactor.

The protein resides in the cytoplasm. It catalyses the reaction RNA(n) + a ribonucleoside 5'-triphosphate = RNA(n+1) + diphosphate. DNA-dependent RNA polymerase (RNAP) catalyzes the transcription of DNA into RNA using the four ribonucleoside triphosphates as substrates. The sequence is that of DNA-directed RNA polymerase subunit Rpo10 from Haloarcula marismortui (strain ATCC 43049 / DSM 3752 / JCM 8966 / VKM B-1809) (Halobacterium marismortui).